The chain runs to 340 residues: Phosphoribosylformylglycinamidine cyclo-ligase (340 aa).

Belongs to the AIR synthase family.

It localises to the cytoplasm. The enzyme catalyses 2-formamido-N(1)-(5-O-phospho-beta-D-ribosyl)acetamidine + ATP = 5-amino-1-(5-phospho-beta-D-ribosyl)imidazole + ADP + phosphate + H(+). Its pathway is purine metabolism; IMP biosynthesis via de novo pathway; 5-amino-1-(5-phospho-D-ribosyl)imidazole from N(2)-formyl-N(1)-(5-phospho-D-ribosyl)glycinamide: step 2/2. This is Phosphoribosylformylglycinamidine cyclo-ligase from Streptococcus sanguinis (strain SK36).